A 410-amino-acid polypeptide reads, in one-letter code: Elongation factor Tu, chloroplastic (410 aa).

Positions 10 to 215 (KPHINIGTIG…MVDKYFPTPE (206 aa)) constitute a tr-type G domain. Residues 19–26 (GHVDHGKT) are G1. 19–26 (GHVDHGKT) provides a ligand contact to GTP. T26 is a binding site for Mg(2+). Residues 61-65 (GITIN) are G2. The tract at residues 82 to 85 (DCPG) is G3. Residues 82-86 (DCPGH) and 137-140 (NKAD) each bind GTP. The G4 stretch occupies residues 137–140 (NKAD). Residues 175–177 (SAL) are G5.

This sequence belongs to the TRAFAC class translation factor GTPase superfamily. Classic translation factor GTPase family. EF-Tu/EF-1A subfamily.

Its subcellular location is the plastid. The protein localises to the chloroplast. The catalysed reaction is GTP + H2O = GDP + phosphate + H(+). In terms of biological role, GTP hydrolase that promotes the GTP-dependent binding of aminoacyl-tRNA to the A-site of ribosomes during protein biosynthesis. The polypeptide is Elongation factor Tu, chloroplastic (tufA) (Cyanidium caldarium (Red alga)).